The following is a 242-amino-acid chain: MIKIGIYGAKGRMGKQIEECLKSETQAQISILYDKGGNLEELFEKSDVIIDFSSPSGTHELLNYARTMPKPLVIGTTGLDEKILHLMQSASEVMPIFYATNMSLGVAVLNYLASKASQMLKNFDIEILEMHHRHKKDAPSGTAMTLAQSVAKARNLELEKVRVSGRDGIIGERSKDEIAVMSLRGGDIVGRHTVGFYEDGEFLELNHTATSRATFAKGAIKIAIWLSKQEAKMYSINDFLGI.

NAD(+)-binding positions include 8 to 13, 75 to 77, and 99 to 102; these read GAKGRM, GTT, and ATNM. His-131 serves as the catalytic Proton donor/acceptor. His-132 contributes to the (S)-2,3,4,5-tetrahydrodipicolinate binding site. Catalysis depends on Lys-135, which acts as the Proton donor. (S)-2,3,4,5-tetrahydrodipicolinate is bound at residue 141 to 142; it reads GT.

It belongs to the DapB family.

It is found in the cytoplasm. The enzyme catalyses (S)-2,3,4,5-tetrahydrodipicolinate + NAD(+) + H2O = (2S,4S)-4-hydroxy-2,3,4,5-tetrahydrodipicolinate + NADH + H(+). It carries out the reaction (S)-2,3,4,5-tetrahydrodipicolinate + NADP(+) + H2O = (2S,4S)-4-hydroxy-2,3,4,5-tetrahydrodipicolinate + NADPH + H(+). The protein operates within amino-acid biosynthesis; L-lysine biosynthesis via DAP pathway; (S)-tetrahydrodipicolinate from L-aspartate: step 4/4. Functionally, catalyzes the conversion of 4-hydroxy-tetrahydrodipicolinate (HTPA) to tetrahydrodipicolinate. The polypeptide is 4-hydroxy-tetrahydrodipicolinate reductase (Campylobacter jejuni subsp. jejuni serotype O:6 (strain 81116 / NCTC 11828)).